Consider the following 89-residue polypeptide: Small ribosomal subunit protein uS14A (89 aa).

Belongs to the universal ribosomal protein uS14 family. As to quaternary structure, part of the 30S ribosomal subunit. Contacts proteins S3 and S10.

In terms of biological role, binds 16S rRNA, required for the assembly of 30S particles and may also be responsible for determining the conformation of the 16S rRNA at the A site. This is Small ribosomal subunit protein uS14A from Listeria monocytogenes serovar 1/2a (strain ATCC BAA-679 / EGD-e).